A 335-amino-acid polypeptide reads, in one-letter code: Nucleoid-associated protein KPN78578_25800 (335 aa).

This sequence belongs to the YejK family.

Its subcellular location is the cytoplasm. The protein localises to the nucleoid. The sequence is that of Nucleoid-associated protein KPN78578_25800 from Klebsiella pneumoniae subsp. pneumoniae (strain ATCC 700721 / MGH 78578).